Consider the following 314-residue polypeptide: Olfactory receptor 10A6 (314 aa).

Topologically, residues 1–25 (MERQNQSCVVEFILLGFSNYPELQG) are extracellular. Asparagine 5 carries an N-linked (GlcNAc...) asparagine glycan. The helical transmembrane segment at 26–46 (QLFVAFLVIYLVTLIGNAIII) threads the bilayer. The Cytoplasmic portion of the chain corresponds to 47 to 54 (VIVSLDQS). The helical transmembrane segment at 55–75 (LHVPMYLFLLNLSVVDLSFSA) threads the bilayer. The Extracellular portion of the chain corresponds to 76-99 (VIMPEMLVVLSTEKTTISFGGCFA). Cysteine 97 and cysteine 189 are disulfide-bonded. The chain crosses the membrane as a helical span at residues 100-120 (QMYFILLFGGAECFLLGAMAY). Residues 121–139 (DRFAAICHPLNYQMIMNKG) are Cytoplasmic-facing. Residues 140–160 (VFMKLIIFSWALGFMLGTVQT) form a helical membrane-spanning segment. Over 161 to 197 (SWVSSFPFCGLNEINHISCETPAVLELACADTFLFEI) the chain is Extracellular. Residues 198-217 (YAFTGTFLIILVPFLLILLS) traverse the membrane as a helical segment. The Cytoplasmic segment spans residues 218–237 (YIRVLFAILKMPSTTGRQKA). The chain crosses the membrane as a helical span at residues 238–258 (FSTCAAHLTSVTLFYGTASMT). Residues 259-271 (YLQPKSGYSPETK) lie on the Extracellular side of the membrane. Residues 272-292 (KVMSLSYSLLTPLLNLLIYSL) traverse the membrane as a helical segment. Residues 293 to 314 (RNSEMKRALMKLWRRRVVLHTI) are Cytoplasmic-facing.

This sequence belongs to the G-protein coupled receptor 1 family.

The protein resides in the cell membrane. Functionally, odorant receptor. This is Olfactory receptor 10A6 (OR10A6) from Homo sapiens (Human).